A 119-amino-acid polypeptide reads, in one-letter code: Ribonuclease P protein component (119 aa).

Belongs to the RnpA family. As to quaternary structure, consists of a catalytic RNA component (M1 or rnpB) and a protein subunit.

The enzyme catalyses Endonucleolytic cleavage of RNA, removing 5'-extranucleotides from tRNA precursor.. Its function is as follows. RNaseP catalyzes the removal of the 5'-leader sequence from pre-tRNA to produce the mature 5'-terminus. It can also cleave other RNA substrates such as 4.5S RNA. The protein component plays an auxiliary but essential role in vivo by binding to the 5'-leader sequence and broadening the substrate specificity of the ribozyme. This Haemophilus influenzae (strain 86-028NP) protein is Ribonuclease P protein component.